We begin with the raw amino-acid sequence, 337 residues long: Inositol 2-dehydrogenase (337 aa).

This sequence belongs to the Gfo/Idh/MocA family. In terms of assembly, homotetramer.

The enzyme catalyses myo-inositol + NAD(+) = scyllo-inosose + NADH + H(+). Functionally, involved in the oxidation of myo-inositol (MI) to 2-keto-myo-inositol (2KMI or 2-inosose). This chain is Inositol 2-dehydrogenase, found in Burkholderia cenocepacia (strain HI2424).